The chain runs to 336 residues: Adenosine deaminase (336 aa).

Residues His15 and His17 each coordinate Zn(2+). 3 residues coordinate substrate: His17, Asp19, and Gly172. Position 199 (His199) interacts with Zn(2+). Catalysis depends on Glu202, which acts as the Proton donor. Asp279 contributes to the Zn(2+) binding site.

The protein belongs to the metallo-dependent hydrolases superfamily. Adenosine and AMP deaminases family. Adenosine deaminase subfamily. Zn(2+) is required as a cofactor.

The enzyme catalyses adenosine + H2O + H(+) = inosine + NH4(+). It catalyses the reaction 2'-deoxyadenosine + H2O + H(+) = 2'-deoxyinosine + NH4(+). Catalyzes the hydrolytic deamination of adenosine and 2-deoxyadenosine. This Streptococcus thermophilus (strain ATCC BAA-491 / LMD-9) protein is Adenosine deaminase.